Reading from the N-terminus, the 37-residue chain is Mu-thomitoxin-Hme1a (37 aa).

3 disulfide bridges follow: C2-C18, C9-C22, and C17-C33. At F37 the chain carries Phenylalanine amide.

It belongs to the neurotoxin 01 (U2-agtx) family. Post-translationally, contains 3 disulfide bonds. In terms of tissue distribution, expressed by the venom gland.

It localises to the secreted. In terms of biological role, blocks the Nav1.2/SCN2A, Nav1.4/SCN4A, and Nav1.6/SCN8A sodium channels. Reduces the peak amplitude of the sodium current and negatively shifts the steady-state inactivation process. Does not shift the threshold potential of activation or the voltage corresponding to maximal current. Does not change the reversal potential of the sodium current. May act on site 1 of the receptor. This chain is Mu-thomitoxin-Hme1a, found in Heriaeus mellotteei (Crab spider).